A 292-amino-acid polypeptide reads, in one-letter code: AKT-interacting protein (292 aa).

Polar residues predominate over residues 1 to 11; sequence MNPLWSMSSGS. Residues 1–64 form a disordered region; the sequence is MNPLWSMSSG…SPAPAAQSTN (64 aa). The segment covering 14–23 has biased composition (basic and acidic residues); the sequence is KRAEGEEKTL. Serine 30 carries the phosphoserine modification. Residues 74-222 form the UBC core domain; that stretch reads YLEYSLLAEF…VVDSVKVCTA (149 aa).

Belongs to the ubiquitin-conjugating enzyme family. FTS subfamily. As to quaternary structure, component of the FTS/Hook/FHIP complex (FHF complex), composed of AKTIP/FTS, FHIP1B, and one or more members of the Hook family of proteins HOOK1, HOOK2, and HOOK3. Interacts directly with HOOK1, HOOK2 and HOOK3. The FHF complex associates with the homotypic vesicular sorting complex (the HOPS complex). Also interacts with AKT1. May interact with FHIP1A.

The protein resides in the cytoplasm. The protein localises to the cell membrane. In terms of biological role, component of the FTS/Hook/FHIP complex (FHF complex). The FHF complex may function to promote vesicle trafficking and/or fusion via the homotypic vesicular protein sorting complex (the HOPS complex). Regulates apoptosis by enhancing phosphorylation and activation of AKT1. Increases release of TNFSF6 via the AKT1/GSK3B/NFATC1 signaling cascade. FHF complex promotes the distribution of AP-4 complex to the perinuclear area of the cell. The chain is AKT-interacting protein (Aktip) from Rattus norvegicus (Rat).